Reading from the N-terminus, the 1581-residue chain is Pentafunctional AROM polypeptide (1581 aa).

Positions M1–N384 are 3-dehydroquinate synthase. NAD(+) is bound by residues D44–N46, E81–K84, G114–V116, and D119. Residue R130 participates in 7-phospho-2-dehydro-3-deoxy-D-arabino-heptonate binding. T139–T140 is an NAD(+) binding site. Residues D146 and K152 each contribute to the 7-phospho-2-dehydro-3-deoxy-D-arabino-heptonate site. K161 provides a ligand contact to NAD(+). N162 lines the 7-phospho-2-dehydro-3-deoxy-D-arabino-heptonate pocket. Residues F179–T182 and N190 each bind NAD(+). Residue E194 participates in Zn(2+) binding. 7-phospho-2-dehydro-3-deoxy-D-arabino-heptonate is bound by residues E194–K197 and K250. The active-site Proton acceptor; for 3-dehydroquinate synthase activity is the E260. Residues R264 to N268 and H271 each bind 7-phospho-2-dehydro-3-deoxy-D-arabino-heptonate. H271 lines the Zn(2+) pocket. The Proton acceptor; for 3-dehydroquinate synthase activity role is filled by H275. 7-phospho-2-dehydro-3-deoxy-D-arabino-heptonate contacts are provided by H287 and K356. Position 287 (H287) interacts with Zn(2+). The interval V397–V842 is EPSP synthase. C824 functions as the For EPSP synthase activity in the catalytic mechanism. The interval S864–S1056 is shikimate kinase. Residue G871–T878 coordinates ATP. Residues L1057–E1277 are 3-dehydroquinase. The active-site Proton acceptor; for 3-dehydroquinate dehydratase activity is the H1180. The Schiff-base intermediate with substrate; for 3-dehydroquinate dehydratase activity role is filled by K1208. The tract at residues K1290–A1581 is shikimate dehydrogenase.

In the N-terminal section; belongs to the sugar phosphate cyclases superfamily. Dehydroquinate synthase family. This sequence in the 2nd section; belongs to the EPSP synthase family. The protein in the 3rd section; belongs to the shikimate kinase family. It in the 4th section; belongs to the type-I 3-dehydroquinase family. In the C-terminal section; belongs to the shikimate dehydrogenase family. As to quaternary structure, homodimer. The cofactor is Zn(2+).

Its subcellular location is the cytoplasm. The catalysed reaction is 7-phospho-2-dehydro-3-deoxy-D-arabino-heptonate = 3-dehydroquinate + phosphate. It carries out the reaction 3-dehydroquinate = 3-dehydroshikimate + H2O. It catalyses the reaction shikimate + NADP(+) = 3-dehydroshikimate + NADPH + H(+). The enzyme catalyses shikimate + ATP = 3-phosphoshikimate + ADP + H(+). The catalysed reaction is 3-phosphoshikimate + phosphoenolpyruvate = 5-O-(1-carboxyvinyl)-3-phosphoshikimate + phosphate. It functions in the pathway metabolic intermediate biosynthesis; chorismate biosynthesis; chorismate from D-erythrose 4-phosphate and phosphoenolpyruvate: step 2/7. It participates in metabolic intermediate biosynthesis; chorismate biosynthesis; chorismate from D-erythrose 4-phosphate and phosphoenolpyruvate: step 3/7. Its pathway is metabolic intermediate biosynthesis; chorismate biosynthesis; chorismate from D-erythrose 4-phosphate and phosphoenolpyruvate: step 4/7. The protein operates within metabolic intermediate biosynthesis; chorismate biosynthesis; chorismate from D-erythrose 4-phosphate and phosphoenolpyruvate: step 5/7. It functions in the pathway metabolic intermediate biosynthesis; chorismate biosynthesis; chorismate from D-erythrose 4-phosphate and phosphoenolpyruvate: step 6/7. In terms of biological role, the AROM polypeptide catalyzes 5 consecutive enzymatic reactions in prechorismate polyaromatic amino acid biosynthesis. The protein is Pentafunctional AROM polypeptide of Aspergillus terreus (strain NIH 2624 / FGSC A1156).